A 409-amino-acid chain; its full sequence is MSTVIKRPTRACVIGHVKIGGDAPVVVQSMTNTDTADYLATALQTAELARAGSELVRITVNSPEAAAAVPKIREHLDRMNCNVPLIGDFHYNGHRLLTEHPACAEALAKYRINPGNVGFGKKKDEQFAQMVELACKYDKPVRIGVNWGSLDQELLARVMDENSRRAEPLDATEMMRHAMVTSALESAAKAEEVGLASEKIILSCKVSSVQDLIAIYRDLSQRANYALHLGLTEAGMGSKGIVASTAALSVLLQEGIGDTIRVSLTPEPGGSRSQEVIVAQEILQTMGLRAFTPMVAACPGCGRTTSTFFQELAGEVQDFVRAKMPEWKLRYDGAENMTLAVMGCIVNGPGESKHANIGISLPGTGEAPSAPVYEDGEKTVTLKGDNIANEFKQIIERYVERTYTKKLKS.

[4Fe-4S] cluster-binding residues include C298, C301, C344, and E351.

This sequence belongs to the IspG family. The cofactor is [4Fe-4S] cluster.

It catalyses the reaction (2E)-4-hydroxy-3-methylbut-2-enyl diphosphate + oxidized [flavodoxin] + H2O + 2 H(+) = 2-C-methyl-D-erythritol 2,4-cyclic diphosphate + reduced [flavodoxin]. It participates in isoprenoid biosynthesis; isopentenyl diphosphate biosynthesis via DXP pathway; isopentenyl diphosphate from 1-deoxy-D-xylulose 5-phosphate: step 5/6. Functionally, converts 2C-methyl-D-erythritol 2,4-cyclodiphosphate (ME-2,4cPP) into 1-hydroxy-2-methyl-2-(E)-butenyl 4-diphosphate. The chain is 4-hydroxy-3-methylbut-2-en-1-yl diphosphate synthase (flavodoxin) from Dechloromonas aromatica (strain RCB).